The chain runs to 134 residues: Endoribonuclease YbeY (134 aa).

Residues His94, His98, and His104 each coordinate Zn(2+).

It belongs to the endoribonuclease YbeY family. The cofactor is Zn(2+).

It is found in the cytoplasm. Functionally, single strand-specific metallo-endoribonuclease involved in late-stage 70S ribosome quality control and in maturation of the 3' terminus of the 16S rRNA. This chain is Endoribonuclease YbeY, found in Campylobacter fetus subsp. fetus (strain 82-40).